Reading from the N-terminus, the 137-residue chain is Small ribosomal subunit protein uS12 (137 aa).

Residues 1 to 24 are disordered; that stretch reads MPTINQLVRKGRRSQSSKSKAPAL. Position 102 is a 3-methylthioaspartic acid (Asp-102).

This sequence belongs to the universal ribosomal protein uS12 family. In terms of assembly, part of the 30S ribosomal subunit. Contacts proteins S8 and S17. May interact with IF1 in the 30S initiation complex.

With S4 and S5 plays an important role in translational accuracy. Functionally, interacts with and stabilizes bases of the 16S rRNA that are involved in tRNA selection in the A site and with the mRNA backbone. Located at the interface of the 30S and 50S subunits, it traverses the body of the 30S subunit contacting proteins on the other side and probably holding the rRNA structure together. The combined cluster of proteins S8, S12 and S17 appears to hold together the shoulder and platform of the 30S subunit. The polypeptide is Small ribosomal subunit protein uS12 (Pediococcus pentosaceus (strain ATCC 25745 / CCUG 21536 / LMG 10740 / 183-1w)).